Consider the following 310-residue polypeptide: Manganese ABC transporter substrate-binding lipoprotein PsaA (310 aa).

Residues 1–20 form the signal peptide; sequence MKKIASVLALFVALLFGLLA. Cys21 carries N-palmitoyl cysteine lipidation. Cys21 carries S-diacylglycerol cysteine lipidation. Mn(2+) contacts are provided by His68, His140, Glu206, and Asp281.

It belongs to the bacterial solute-binding protein 9 family. Lipoprotein receptor antigen (Lrai) subfamily.

The protein localises to the cell membrane. Part of the ATP-binding cassette (ABC) transport system PsaABC involved in manganese import. Binds manganese with high affinity and specificity and delivers it to the membrane permease for translocation into the cytoplasm. Also acts as an adhesin which is involved on adherence to extracellular matrix. The chain is Manganese ABC transporter substrate-binding lipoprotein PsaA from Streptococcus pneumoniae.